The primary structure comprises 510 residues: Serine/threonine protein phosphatase 2A 59 kDa regulatory subunit B' eta isoform (510 aa).

The tract at residues 1-87 (MWKQILSKLP…NNNNNNNNGV (87 aa)) is disordered. Residues 10-19 (PNKKSSKHEH) are compositionally biased toward basic residues. Residues 27 to 42 (HSSSSSHTSGASTSKS) show a composition bias toward low complexity.

It belongs to the phosphatase 2A regulatory subunit B56 family. PP2A consists of a common heteromeric enzyme, composed of a catalytic subunit (subunits C), a constant regulatory subunit (subunit A), and a variety of regulatory subunits such as subunits B (the R2/B/PR55/B55, R3/B''/PR72/PR130/PR59 and R5/B'/B56 families). Interacts with BZR1. Interacts with BRI1.

The protein resides in the nucleus. It localises to the nucleolus. Its subcellular location is the cytoplasm. In terms of biological role, the B regulatory subunit may modulate substrate selectivity and catalytic activity, and may also direct the localization of the catalytic enzyme to a particular subcellular compartment. The holoenzyme composed of PP2AA1, PP2A4 and B'ETA acts as negative regulator of plant innate immunity by controlling BAK1 phosphorylation state and activation in surface-localized immune receptor complexes. Required for the formation of the PP2A holoenzyme that negatively regulates brassinosteroid signaling by dephosphorylating and inactivating BRI1 in the cytoplasm. In Arabidopsis thaliana (Mouse-ear cress), this protein is Serine/threonine protein phosphatase 2A 59 kDa regulatory subunit B' eta isoform (B'ETA).